Consider the following 945-residue polypeptide: Kinesin-like protein CIN8 (945 aa).

Residues 22–409 (NITVAVRCRG…LEYAAKAKNI (388 aa)) form the Kinesin motor domain. Residue 114–121 (GMTSTGKT) participates in ATP binding. The disordered stretch occupies residues 190 to 243 (IFDSSSMNHSSRASSQSNSPREPEVAHNGFSRRRQRPPPVKANRMSATKQQLSE). Over residues 193-208 (SSSMNHSSRASSQSNS) the composition is skewed to low complexity. Polar residues predominate over residues 234–243 (MSATKQQLSE). Coiled coils occupy residues 450–562 (MSHE…DIKE) and 634–675 (LKEF…YLDQ).

This sequence belongs to the TRAFAC class myosin-kinesin ATPase superfamily. Kinesin family. BimC subfamily.

The protein localises to the cytoplasm. It localises to the cytoskeleton. It is found in the spindle. Its function is as follows. Elongates the mitotic spindle by interacting with spindle microtubules to generate an outward force pushing spindle poles apart. Following spindle assembly, CIN8 and KIP1 apparently act to oppose a force, possibly generated by KAR3, that draws separated poles back together. The sequence is that of Kinesin-like protein CIN8 (CIN8) from Eremothecium gossypii (strain ATCC 10895 / CBS 109.51 / FGSC 9923 / NRRL Y-1056) (Yeast).